Reading from the N-terminus, the 100-residue chain is Large ribosomal subunit protein uL23 (100 aa).

The protein belongs to the universal ribosomal protein uL23 family. As to quaternary structure, part of the 50S ribosomal subunit. Contacts protein L29, and trigger factor when it is bound to the ribosome.

Functionally, one of the early assembly proteins it binds 23S rRNA. One of the proteins that surrounds the polypeptide exit tunnel on the outside of the ribosome. Forms the main docking site for trigger factor binding to the ribosome. This chain is Large ribosomal subunit protein uL23, found in Aeromonas salmonicida (strain A449).